A 125-amino-acid chain; its full sequence is Histone H2A (125 aa).

Positions 1 to 18 (MSGRGKGGKVKAKAKSRS) are enriched in basic residues. The tract at residues 1–21 (MSGRGKGGKVKAKAKSRSSRA) is disordered. The residue at position 2 (Ser2) is an N-acetylserine. Position 2 is a phosphoserine (Ser2). A Glycyl lysine isopeptide (Lys-Gly) (interchain with G-Cter in ubiquitin) cross-link involves residue Lys119.

The protein belongs to the histone H2A family. In terms of assembly, the nucleosome is a histone octamer containing two molecules each of H2A, H2B, H3 and H4 assembled in one H3-H4 heterotetramer and two H2A-H2B heterodimers. The octamer wraps approximately 147 bp of DNA. Monoubiquitination of Lys-119 gives a specific tag for epigenetic transcriptional repression. Post-translationally, phosphorylation on Ser-2 is enhanced during mitosis. Phosphorylation on Ser-2 directly represses transcription.

Its subcellular location is the nucleus. It is found in the chromosome. Core component of nucleosome. Nucleosomes wrap and compact DNA into chromatin, limiting DNA accessibility to the cellular machineries which require DNA as a template. Histones thereby play a central role in transcription regulation, DNA repair, DNA replication and chromosomal stability. DNA accessibility is regulated via a complex set of post-translational modifications of histones, also called histone code, and nucleosome remodeling. This chain is Histone H2A, found in Chironomus thummi thummi (Midge).